The primary structure comprises 238 residues: Uridylate kinase (238 aa).

Residue 12-15 participates in ATP binding; sequence KLSG. Glycine 54 contacts UMP. ATP-binding residues include glycine 55 and arginine 59. UMP contacts are provided by residues aspartate 74 and 135–142; that span reads TGNPFFTT. 3 residues coordinate ATP: threonine 162, tyrosine 168, and aspartate 171.

The protein belongs to the UMP kinase family. In terms of assembly, homohexamer.

It localises to the cytoplasm. The catalysed reaction is UMP + ATP = UDP + ADP. Its pathway is pyrimidine metabolism; CTP biosynthesis via de novo pathway; UDP from UMP (UMPK route): step 1/1. With respect to regulation, inhibited by UTP. Its function is as follows. Catalyzes the reversible phosphorylation of UMP to UDP. The polypeptide is Uridylate kinase (Bordetella avium (strain 197N)).